The chain runs to 175 residues: Pituitary adenylate cyclase-activating polypeptide (175 aa).

Positions Met1–Cys24 are cleaved as a signal peptide. Residues Ser25–Asp78 constitute a propeptide that is removed on maturation. Residues Val149–Leu157 are important for receptor binding. Leu157 carries the leucine amide modification. Lys168 is subject to Lysine amide. A propeptide spanning residues Ile172 to Leu175 is cleaved from the precursor.

It belongs to the glucagon family.

It is found in the secreted. In terms of biological role, PACAP is a neuropeptide involved in diverse array of physiological processes through activating the PACAP subfamily of class B1 G protein-coupled receptors: VIP receptor 1 (VIPR1), VIP receptor 2 (VIPR2), and PACAP type I receptor (ADCYAP1R1). Exerts neuroprotective and general cytoprotective effects due to anti-apoptotic, anti-inflammatory, and antioxidant actions. Promotes neuron projection development through the RAPGEF2/Rap1/B-Raf/ERK pathway. In chromaffin cells, induces long-lasting increase of intracellular calcium concentrations and neuroendocrine secretion. Involved in the control of glucose homeostasis, induces insulin secretion by pancreatic beta cells. PACAP exists in two bioactive forms from proteolysis of the same precursor protein, PACAP27 and PACAP38, which differ by eleven amino acid residues in the C-terminus. This Rattus norvegicus (Rat) protein is Pituitary adenylate cyclase-activating polypeptide (Adcyap1).